We begin with the raw amino-acid sequence, 90 residues long: Acylphosphatase (90 aa).

Positions 5–90 (CEKFVVSGIV…CREYQGFEIL (86 aa)) constitute an Acylphosphatase-like domain. Residues Arg20 and Asn38 contribute to the active site.

This sequence belongs to the acylphosphatase family.

It catalyses the reaction an acyl phosphate + H2O = a carboxylate + phosphate + H(+). The sequence is that of Acylphosphatase (acyP) from Vibrio vulnificus (strain CMCP6).